The primary structure comprises 1295 residues: Phosphoribosylformylglycinamidine synthase (1295 aa).

The tract at residues 305–327 (WPGAATGSGGEIRDEGATGRGAK) is disordered. ATP contacts are provided by residues 307 to 318 (GAATGSGGEIRD), 386 to 388 (TGY), and A678. D679, E718, N722, and D884 together coordinate Mg(2+). S886 is a binding site for ATP. Residues 1042–1295 (VAVLREQGVN…IFRNARKQLG (254 aa)) form the Glutamine amidotransferase type-1 domain. Residue C1135 is the Nucleophile of the active site. Catalysis depends on residues H1260 and E1262.

This sequence in the N-terminal section; belongs to the FGAMS family. As to quaternary structure, monomer.

It is found in the cytoplasm. The enzyme catalyses N(2)-formyl-N(1)-(5-phospho-beta-D-ribosyl)glycinamide + L-glutamine + ATP + H2O = 2-formamido-N(1)-(5-O-phospho-beta-D-ribosyl)acetamidine + L-glutamate + ADP + phosphate + H(+). The protein operates within purine metabolism; IMP biosynthesis via de novo pathway; 5-amino-1-(5-phospho-D-ribosyl)imidazole from N(2)-formyl-N(1)-(5-phospho-D-ribosyl)glycinamide: step 1/2. Functionally, phosphoribosylformylglycinamidine synthase involved in the purines biosynthetic pathway. Catalyzes the ATP-dependent conversion of formylglycinamide ribonucleotide (FGAR) and glutamine to yield formylglycinamidine ribonucleotide (FGAM) and glutamate. The chain is Phosphoribosylformylglycinamidine synthase from Salmonella typhimurium (strain LT2 / SGSC1412 / ATCC 700720).